Consider the following 245-residue polypeptide: MSEELSAATSYTEDDFYCPVCQEVLKTPVRTAACQHVFCRKCFLTAMRESGIHCPLCRGSVTRRERACPERALDLENIMRRFSGSCRCCSKKIKFYRMRHHYKSCKKYQDEYGVSSVIPNFKISQDSVRSSNRSETSASDNTETYQEDTSSSGHPTFKCPLCQESNFTRQRLLDHCNSNHLFQIVPVTCPICVSLPWGDPSQITRNFVSHLNQRHQFDYGEFVNLQLDEETQYQTAVEESFQVNM.

An RING-type zinc finger spans residues 18-58; sequence CPVCQEVLKTPVRTAACQHVFCRKCFLTAMRESGIHCPLCR. Cysteine 86, cysteine 89, histidine 101, and cysteine 105 together coordinate Zn(2+). The segment at 86–105 adopts a C2HC RNF-type zinc-finger fold; it reads CRCCSKKIKFYRMRHHYKSC. A disordered region spans residues 128–154; sequence VRSSNRSETSASDNTETYQEDTSSSGH. Threonine 142 is subject to Phosphothreonine. 2 C2H2-type zinc fingers span residues 157-180 and 187-215; these read FKCP…NSNH and VTCP…NQRH. Residues 225-243 form the UIM domain; sequence LQLDEETQYQTAVEESFQV.

Interacts with NLK. Interacts with XRCC5/Ku80. Interacts with RBBP8/CtIP. Post-translationally, auto-ubiquitinated.

The protein resides in the chromosome. It carries out the reaction S-ubiquitinyl-[E2 ubiquitin-conjugating enzyme]-L-cysteine + [acceptor protein]-L-lysine = [E2 ubiquitin-conjugating enzyme]-L-cysteine + N(6)-ubiquitinyl-[acceptor protein]-L-lysine.. It participates in protein modification; protein ubiquitination. Its function is as follows. E3 ubiquitin-protein ligase involved in DNA damage response by promoting DNA resection and homologous recombination. Recruited to sites of double-strand breaks following DNA damage and specifically promotes double-strand break repair via homologous recombination. Two different, non-exclusive, mechanisms have been proposed. According to a report, regulates the choice of double-strand break repair by favoring homologous recombination over non-homologous end joining (NHEJ): acts by mediating ubiquitination of XRCC5/Ku80, leading to remove the Ku complex from DNA breaks, thereby promoting homologous recombination. According to another report, cooperates with UBE2Ds E2 ubiquitin ligases (UBE2D1, UBE2D2, UBE2D3 or UBE2D4) to promote homologous recombination by mediating ubiquitination of RBBP8/CtIP. Together with NLK, involved in the ubiquitination and degradation of TCF/LEF. Also exhibits auto-ubiquitination activity in combination with UBE2K. May act as a negative regulator in the Wnt/beta-catenin-mediated signaling pathway. The sequence is that of E3 ubiquitin-protein ligase RNF138 from Mus musculus (Mouse).